Here is a 70-residue protein sequence, read N- to C-terminus: uncharacterized protein (70 aa).

This is an uncharacterized protein from Escherichia coli O157:H7.